Consider the following 145-residue polypeptide: D-aminoacyl-tRNA deacylase (145 aa).

The Gly-cisPro motif, important for rejection of L-amino acids motif lies at 137–138 (GP).

It belongs to the DTD family. In terms of assembly, homodimer.

The protein localises to the cytoplasm. It catalyses the reaction glycyl-tRNA(Ala) + H2O = tRNA(Ala) + glycine + H(+). It carries out the reaction a D-aminoacyl-tRNA + H2O = a tRNA + a D-alpha-amino acid + H(+). An aminoacyl-tRNA editing enzyme that deacylates mischarged D-aminoacyl-tRNAs. Also deacylates mischarged glycyl-tRNA(Ala), protecting cells against glycine mischarging by AlaRS. Acts via tRNA-based rather than protein-based catalysis; rejects L-amino acids rather than detecting D-amino acids in the active site. By recycling D-aminoacyl-tRNA to D-amino acids and free tRNA molecules, this enzyme counteracts the toxicity associated with the formation of D-aminoacyl-tRNA entities in vivo and helps enforce protein L-homochirality. This chain is D-aminoacyl-tRNA deacylase, found in Pseudomonas fluorescens (strain ATCC BAA-477 / NRRL B-23932 / Pf-5).